Here is a 196-residue protein sequence, read N- to C-terminus: Large ribosomal subunit protein uL5 (196 aa).

Belongs to the universal ribosomal protein uL5 family. As to quaternary structure, part of the 50S ribosomal subunit; part of the 5S rRNA/L5/L18/L25 subcomplex. Contacts the 5S rRNA and the P site tRNA. Forms a bridge to the 30S subunit in the 70S ribosome.

In terms of biological role, this is one of the proteins that bind and probably mediate the attachment of the 5S RNA into the large ribosomal subunit, where it forms part of the central protuberance. In the 70S ribosome it contacts protein S13 of the 30S subunit (bridge B1b), connecting the 2 subunits; this bridge is implicated in subunit movement. Contacts the P site tRNA; the 5S rRNA and some of its associated proteins might help stabilize positioning of ribosome-bound tRNAs. The chain is Large ribosomal subunit protein uL5 from Chlorobium phaeobacteroides (strain BS1).